The following is a 326-amino-acid chain: MIRAYEQNPQHFIEDLEKVRVEQLTGHGSSVLEELVQLVKDKNIDISIKYDPRKDSEVFANRVITDDIELLKKILAYFLPEDAILKGGHYDNQLQNGIKRVKEFLESSPNTQWELRAFMAVIHFSLTADRIDDDILKVIVDSMNHHGDARSKLREELAELTAELKIYSVIQAEINKHLSSGGTINIHDKSINLMDKNLYGYTDEEIFKASAEYKILEKMPQTTIQEGETEKKIVSIKNFLESEKKRTGALGNLKDSYSYNKDNNELSHFATTCSDKSRPLNDLVSQKTTQLSDITSRFNSAIEALNRFIQKYDSVMQRLLDDTSGK.

It is found in the secreted. Its function is as follows. Involved in calcium regulation of yop expression, which includes the export process. The sequence is that of Virulence-associated V antigen (lcrV) from Yersinia pseudotuberculosis serotype I (strain IP32953).